A 77-amino-acid chain; its full sequence is Liver-expressed antimicrobial peptide 2 (77 aa).

The N-terminal stretch at 1–22 (MWHLKLCAVLMIFLLLLGQTDG) is a signal peptide. A propeptide spanning residues 23–37 (SPIPEVSSAKRRPRR) is cleaved from the precursor. Disulfide bonds link Cys-54–Cys-65 and Cys-60–Cys-70.

It belongs to the LEAP2 family.

It is found in the secreted. Has an antimicrobial activity. The sequence is that of Liver-expressed antimicrobial peptide 2 (LEAP2) from Macaca mulatta (Rhesus macaque).